The sequence spans 217 residues: Cytochrome b5 domain-containing protein 1 (217 aa).

The Cytochrome b5 heme-binding domain maps to 6 to 72 (PRYFTPREVS…NPKTGDVKTH (67 aa)). Residues His-41 and His-72 each coordinate heme.

It belongs to the cytochrome b5 family.

The protein resides in the cytoplasm. Its subcellular location is the cytoskeleton. It is found in the cilium axoneme. Radial spoke stalk protein that binds heme under oxidizing conditions. Required for the coordinated beating of multiple cilia maybe by functioning in a redox signaling pathway. The protein is Cytochrome b5 domain-containing protein 1 (cyb5d1) of Xenopus laevis (African clawed frog).